Here is a 418-residue protein sequence, read N- to C-terminus: Tyrosine--tRNA ligase (418 aa).

Tyr-34 is an L-tyrosine binding site. The short motif at 39–48 (PTADSLHLGH) is the 'HIGH' region element. L-tyrosine contacts are provided by Tyr-169 and Gln-173. The 'KMSKS' region signature appears at 229–233 (KFGKS). An ATP-binding site is contributed by Lys-232. Residues 352 to 418 (LNLVDMLVTA…GKKKYAVLTY (67 aa)) form the S4 RNA-binding domain.

The protein belongs to the class-I aminoacyl-tRNA synthetase family. TyrS type 1 subfamily. In terms of assembly, homodimer.

It localises to the cytoplasm. The enzyme catalyses tRNA(Tyr) + L-tyrosine + ATP = L-tyrosyl-tRNA(Tyr) + AMP + diphosphate + H(+). Its function is as follows. Catalyzes the attachment of tyrosine to tRNA(Tyr) in a two-step reaction: tyrosine is first activated by ATP to form Tyr-AMP and then transferred to the acceptor end of tRNA(Tyr). The protein is Tyrosine--tRNA ligase of Streptococcus pyogenes serotype M6 (strain ATCC BAA-946 / MGAS10394).